The primary structure comprises 143 residues: Methylglyoxal synthase (143 aa).

An MGS-like domain is found at methionine 1–isoleucine 143. Substrate-binding positions include histidine 11, lysine 15, threonine 37–threonine 40, and serine 57–glycine 58. The active-site Proton donor/acceptor is aspartate 63. Residue histidine 90 coordinates substrate.

This sequence belongs to the methylglyoxal synthase family.

The enzyme catalyses dihydroxyacetone phosphate = methylglyoxal + phosphate. In terms of biological role, catalyzes the formation of methylglyoxal from dihydroxyacetone phosphate. This is Methylglyoxal synthase from Coxiella burnetii (strain Dugway 5J108-111).